We begin with the raw amino-acid sequence, 1424 residues long: Putative disease resistance protein At3g14460 (1424 aa).

The region spanning 152-454 is the NB-ARC domain; the sequence is WRQASRSRPD…AIDLLYQPRS (303 aa). 200–207 contributes to the ATP binding site; it reads GMPGVGKT. 7 LRR repeats span residues 498 to 523, 552 to 571, 572 to 595, 597 to 618, 620 to 641, 642 to 665, and 806 to 830; these read VSGD…HFSF, PTSL…LLNA, LSGL…LKGL, LLRY…VCTL, NLQT…SIAE, LINL…IKKL, and LPSL…FFFG. 2 disordered regions span residues 911-977 and 1050-1070; these read FRRS…PKDR and IKSS…QYDD. 2 stretches are compositionally biased toward polar residues: residues 912-927 and 934-972; these read RRSL…SIPS and SSPT…SLSS. LRR repeat units lie at residues 1090-1114, 1118-1139, 1238-1262, 1264-1286, and 1310-1336; these read PQNL…LTES, LHEL…HPPT, TPKL…LFGL, SLLS…GFPS, and LENL…LLPK.

Belongs to the disease resistance NB-LRR family.

In terms of biological role, potential disease resistance protein. The protein is Putative disease resistance protein At3g14460 of Arabidopsis thaliana (Mouse-ear cress).